The sequence spans 954 residues: E3 ubiquitin-protein ligase arkadia (954 aa).

Polar residues predominate over residues 50–66 (LCSDTNKQQRDLNSNGT). Disordered stretches follow at residues 50-175 (LCSD…VSSL) and 193-276 (RKRF…SGGM). 2 stretches are compositionally biased toward low complexity: residues 112–131 (SSFS…GDSD) and 232–251 (SSSS…SSST). The SUMO interaction motif 1 (SIM) signature appears at 280–284 (VVVIE). The SUMO interaction motif 2 (SIM) motif lies at 305–311 (EVEIVTV). 3 disordered regions span residues 318 to 346 (RTTL…RNRV), 364 to 452 (TVDE…MPRL), and 485 to 509 (HFPH…SFRD). A compositionally biased stretch (polar residues) spans 328–337 (WGQNTQSGRT). Positions 360-364 (VVDLT) match the SUMO interaction motif 3 (SIM) motif. Over residues 385-395 (VSTVSSNTSTS) the composition is skewed to low complexity. The span at 485-496 (HFPHHHHHHHQS) shows a compositional bias: basic residues. The tract at residues 867-869 (YPH) is ubiquitin binding. Cys-902 and Cys-905 together coordinate Zn(2+). An RING-type; atypical zinc finger spans residues 902-943 (CTICLSILEEGEDVRRLPCMHLFHQVCVDQWLITNKKCPICR). Residues 917–921 (RLPCM) are ubiquitin binding. Zn(2+) contacts are provided by His-925 and Cys-928.

The protein belongs to the Arkadia family. Monomer.

It is found in the nucleus. The protein resides in the cytoplasm. Its subcellular location is the PML body. It catalyses the reaction S-ubiquitinyl-[E2 ubiquitin-conjugating enzyme]-L-cysteine + [acceptor protein]-L-lysine = [E2 ubiquitin-conjugating enzyme]-L-cysteine + N(6)-ubiquitinyl-[acceptor protein]-L-lysine.. The protein operates within protein modification; protein ubiquitination. Binds free ubiquitin non-covalently via its RING-type zinc finger. Ubiquitin-binding leads to enhance the E3 ubiquitin-protein ligase activity by stabilizing the ubiquitin-conjugating enzyme E2 (donor ubiquitin) in the 'closed' conformation and activating ubiquitin transfer. Functionally, E3 ubiquitin-protein ligase required for mesoderm patterning during embryonic development. Acts as an enhancer of the transcriptional responses of the smad2/smad3 effectors, which are activated downstream of BMP. Acts by mediating ubiquitination and degradation of SMAD inhibitors such as smad7, inducing their proteasomal degradation and thereby enhancing the transcriptional activity of TGF-beta and BMP. Specifically binds polysumoylated chains via SUMO interaction motifs (SIMs) and mediates ubiquitination of sumoylated substrates. The regulation of the BMP-SMAD signaling is however independent of sumoylation and is not dependent of SUMO interaction motifs (SIMs). The protein is E3 ubiquitin-protein ligase arkadia (rnf111) of Xenopus tropicalis (Western clawed frog).